The following is a 1411-amino-acid chain: MKSLLDLFKQFTPDEHFDAIRIGMASPEKIRSWSFGEVKKPETINYRTFKPERDGLFCAKIFGPIKDYECLCGKYKRLKHRGVICEKCGVEVTQTKVRRERMGHIDLAAPCAHIWFLKSLPSRLGLVLDMTLRDIERVLYFEAYVVTDPGMTPLKKFGIMSEDDHDAKRKEYGDEFIAKMGAEGIKDLLEGIDIDLEIEKLRGDLTGSEVKVKKNAKRLKVLEAFKKSGIKPEWMVLDVLPVLPPDLRPLVPLDGGRFATSDLNDLYRRVINRNSRLRRLLELKAPEIIARNEKRMLQEAVDSLLDNGRRGKAMTGANKRALKSLADMIKGKSGRFRQNLLGKRVDYSGRSVITVGPTLKLHQCGLPKLMALELFKPFIFSRLEQMGIATTIKAAKKEVESGTPVVWDILEEVIKEHPVMLNRAPTLHRLGIQAFEPILIEGKAIQLHPLVCAAFNADFDGDQMAVHVPLSVEAQMEARTLMLASNNVLFPASGEPSIVPSQDVVLGLYHATRDKINGKGEGLVFADTGEVQRALDAGQVELHAKISVRLTEWTKDKASGEFVPSTSLVDTTVGRALLSEILPKGLPFSNINKALKKKEISKLINVSFRKCGLKETVVFADKLLQNGFRLATRAGFSVAIDDMLVPPQKTEILARAEAEVKEIEQQYVSGLVTAGERYNKVVDIWGKAGDDVSKVMMDQLKVEKTTDRHGKEVNQESFNAIYMMADSGARGSAAQIRQLAGMRGLMAKPDGSIIETPITANFREGLNVLQYFISTHGARKGLADTALKTANSGYLTRRLVDVTQDLVVTEEDCGTTNGSVMRAIVEGGEVIESLRERVLGRSTAEEVLHPETRAVLVPAGQMLDEDTLEELEAAGVDEVKVRTALTCETRYGLCAKCYGRDLGRGGLINLGEAVGVIAAQSIGEPGTQLTMRTFHIGGAASRAAIASTVEAKSNGVIGFNATMRYVTNSKGELVVIARSGEVIIQDEHGRERERHKVPYGATLTVKADQQVKAGTILANWDPLTRPIITEFAGQVKFENIEEGLTVAKQVDDVTGLSTLVVIDPKRRGSAKVVRPQVKLVDANGAEVKIPGTDHSVTIGFQVGALIQVRDGQDVGPGEVLARIPVEGQKTRDITGGLPRVAELFEARSPKDKGMLAEITGTVSFGKETKGKVRLQITDPDGKVWDELVPKEKNVLVHEGQVVNKGELIVDGPADPQDILRLLGIEELSRYIVDEVQDVYRLQGVKINDKHIEVIVRQMLRRVVVENPGESGYIAGEQVERSEILNTNEQLQSEGKIPATYSNVLLGITKASLSTDSFISAASFQETTRVLTEAAIMGKRDELRGLKENVIVGRLIPAGTGLAYHQARKAKEAMDDAERRAIAEAEAAEMATTGSDEAPEVEGSGVESGSAE.

Zn(2+) contacts are provided by Cys-70, Cys-72, Cys-85, and Cys-88. Mg(2+)-binding residues include Asp-458, Asp-460, and Asp-462. 4 residues coordinate Zn(2+): Cys-813, Cys-887, Cys-894, and Cys-897. Positions 1384 to 1411 (AEAAEMATTGSDEAPEVEGSGVESGSAE) are disordered.

The protein belongs to the RNA polymerase beta' chain family. As to quaternary structure, the RNAP catalytic core consists of 2 alpha, 1 beta, 1 beta' and 1 omega subunit. When a sigma factor is associated with the core the holoenzyme is formed, which can initiate transcription. The cofactor is Mg(2+). Zn(2+) serves as cofactor.

It catalyses the reaction RNA(n) + a ribonucleoside 5'-triphosphate = RNA(n+1) + diphosphate. In terms of biological role, DNA-dependent RNA polymerase catalyzes the transcription of DNA into RNA using the four ribonucleoside triphosphates as substrates. This chain is DNA-directed RNA polymerase subunit beta', found in Paracidovorax citrulli (strain AAC00-1) (Acidovorax citrulli).